The primary structure comprises 755 residues: Catalase-peroxidase (755 aa).

A cross-link (tryptophyl-tyrosyl-methioninium (Trp-Tyr) (with M-271)) is located at residues 91–245 (WHSAGTYRTA…LAAVQMGLIY (155 aa)). Catalysis depends on histidine 92, which acts as the Proton acceptor. Residues 193 to 229 (DNRYGKDPESMQPPGEGTLVAEPAEHGNEESRTNQGE) are disordered. The span at 215-224 (PAEHGNEESR) shows a compositional bias: basic and acidic residues. A cross-link (tryptophyl-tyrosyl-methioninium (Tyr-Met) (with W-91)) is located at residues 245–271 (YVNPEGPEGNPDPVASAKDIRETFGRM). Histidine 286 contacts heme.

This sequence belongs to the peroxidase family. Peroxidase/catalase subfamily. In terms of assembly, homodimer or homotetramer. Heme b is required as a cofactor. In terms of processing, formation of the three residue Trp-Tyr-Met cross-link is important for the catalase, but not the peroxidase activity of the enzyme.

The enzyme catalyses H2O2 + AH2 = A + 2 H2O. It catalyses the reaction 2 H2O2 = O2 + 2 H2O. Its function is as follows. Bifunctional enzyme with both catalase and broad-spectrum peroxidase activity. The polypeptide is Catalase-peroxidase (Pseudomonas fluorescens (strain Pf0-1)).